A 625-amino-acid polypeptide reads, in one-letter code: Glucokinase regulatory protein (625 aa).

2 SIS domains span residues 90–286 (VQEV…QGIA) and 320–499 (VSTS…LLGK). Residues 109 to 110 (TS), E153, and 179 to 181 (SVG) each bind beta-D-fructose 1-phosphate. Residue 109–110 (TS) participates in beta-D-fructose 6-phosphate binding. Residue 179 to 181 (SVG) participates in beta-D-fructose 6-phosphate binding. The interval 199–200 (AV) is important for interaction with GCK. E348 contributes to the beta-D-fructose 1-phosphate binding site. The segment at 463 to 465 (LLF) is essential for interaction with GCK. K514 is a binding site for beta-D-fructose 1-phosphate. A beta-D-fructose 6-phosphate-binding site is contributed by K514.

The protein belongs to the GCKR family. Interacts (fructose 6-phosphate bound form) with GCK. In terms of tissue distribution, found in liver and pancreas. Not detected in muscle, brain, heart, thymus, intestine, uterus, adipose tissue, kidney, adrenal, lung or spleen.

It is found in the cytoplasm. Its subcellular location is the nucleus. The protein resides in the mitochondrion. In terms of biological role, regulates glucokinase (GCK) by forming an inactive complex with this enzyme. Acts by promoting GCK recruitment to the nucleus, possibly to provide a reserve of GCK that can be quickly released in the cytoplasm after a meal. The affinity of GCKR for GCK is modulated by fructose metabolites: GCKR with bound fructose 6-phosphate has increased affinity for GCK, while GCKR with bound fructose 1-phosphate has strongly decreased affinity for GCK and does not inhibit GCK activity. The polypeptide is Glucokinase regulatory protein (Homo sapiens (Human)).